The following is a 185-amino-acid chain: HTH-type transcriptional regulator SAR2658 (185 aa).

The HTH tetR-type domain occupies 6-66; sequence KENRQRIEEI…YVIQRDLDIF (61 aa). A DNA-binding region (H-T-H motif) is located at residues 29–48; that stretch reads SMNRIAKELGIGMGTLYRHF.

This Staphylococcus aureus (strain MRSA252) protein is HTH-type transcriptional regulator SAR2658.